We begin with the raw amino-acid sequence, 422 residues long: MSSQVFCISTGQTVSVCLPANEDPVEFPGAFFTPNAKKPTVYIKKETDLSLLRSHVYDGIKDGSVTVSQINSYLYMVLKDIREKPDKNWTSFGVELGKKNEPMGIFDLLNVEDVKGKELDKKGQDTRLPGDDLWLPTLIFGLYRVSRATQVEYKKTLMTNLYAQCKLRTKDAEEIVDETAEFFNAWANDSNFTKIVAAVDMYFHHFKKSDHAPIRFGTIVSRFKDCAALSTLSHLQKVTGLPIEEVFTWVFNKSVQDDLLRMMTPGQEIDQADSYMPYLIDMGLSTKSPYSSTKNPSFHFWGQLTAFLVKSARAKNALVPVDIAYHELTTAALLFAYAIGRSSELEQRFVLNGKKFTKEKDSREDNDTTPPSERNVVVWLAWWEDIKHEITPDMKAFAKRAVERVGDIRVNSVAEYARKLFA.

Residues 1-180 (MSSQVFCIST…DAEEIVDETA (180 aa)) form an interaction with the phosphoprotein (N0-P) region. Residues 180–320 (AEFFNAWAND…SARAKNALVP (141 aa)) form an oligomerization region. The tract at residues 320 to 390 (PVDIAYHELT…AWWEDIKHEI (71 aa)) is interaction with the phosphoprotein (N-RNA-P). 320–422 (PVDIAYHELT…VAEYARKLFA (103 aa)) lines the RNA pocket.

The protein belongs to the vesiculovirus nucleocapsid protein family. Homomultimerizes to form the nucleocapsid. Binds to viral genomic RNA; this interaction contributes to the virion assembly. N in the nucleocapsid interacts (via C-terminus) with the P protein (via C-terminus); this interaction allows to package the L polymerase in the virion and positions the polymerase on the template, since P acts as a bridge between N and L. N(0) interacts with the P protein; this interaction prevents the uncontrolled aggregation of N(0). Interacts with the matrix protein (inner layer); this interaction contributes to the virion assembly. Interacts with the L polymerase.

It is found in the virion. The protein resides in the host cytoplasm. Its function is as follows. Encapsidates the genome in a ratio of one N per nine ribonucleotides, protecting it from nucleases. The encapsidated genomic RNA is termed the NC and serves as template for transcription and replication. The nucleocapsid is bullet-shaped with the tip containing 8 turns of a conical spiral before reaching the helical cylindrical trunk. Nucleocapsid assembly is concomitant with replication, therefore viral replication depends on the intracellular concentration of free N, termed N(0). All replicative products are resistant to nucleases. The protein is Nucleoprotein (N) of Chandipura virus (strain I653514) (CHPV).